Here is a 147-residue protein sequence, read N- to C-terminus: Putative pre-16S rRNA nuclease (147 aa).

It belongs to the YqgF nuclease family.

It is found in the cytoplasm. Its function is as follows. Could be a nuclease involved in processing of the 5'-end of pre-16S rRNA. The sequence is that of Putative pre-16S rRNA nuclease from Limosilactobacillus reuteri (strain DSM 20016) (Lactobacillus reuteri).